A 341-amino-acid chain; its full sequence is L-threonine 3-dehydrogenase (341 aa).

Residue cysteine 38 coordinates Zn(2+). Catalysis depends on charge relay system residues threonine 40 and histidine 43. Zn(2+) contacts are provided by histidine 63, glutamate 64, cysteine 93, cysteine 96, cysteine 99, and cysteine 107. Residues isoleucine 175, aspartate 195, arginine 200, 262-264, and 286-287 each bind NAD(+); these read LGI and IY.

Belongs to the zinc-containing alcohol dehydrogenase family. As to quaternary structure, homotetramer. Requires Zn(2+) as cofactor.

It localises to the cytoplasm. The enzyme catalyses L-threonine + NAD(+) = (2S)-2-amino-3-oxobutanoate + NADH + H(+). It functions in the pathway amino-acid degradation; L-threonine degradation via oxydo-reductase pathway; glycine from L-threonine: step 1/2. Functionally, catalyzes the NAD(+)-dependent oxidation of L-threonine to 2-amino-3-ketobutyrate. This chain is L-threonine 3-dehydrogenase, found in Salmonella arizonae (strain ATCC BAA-731 / CDC346-86 / RSK2980).